The primary structure comprises 172 residues: Nicotinamide-nucleotide adenylyltransferase (172 aa).

Belongs to the archaeal NMN adenylyltransferase family.

The protein resides in the cytoplasm. It carries out the reaction beta-nicotinamide D-ribonucleotide + ATP + H(+) = diphosphate + NAD(+). It participates in cofactor biosynthesis; NAD(+) biosynthesis; NAD(+) from nicotinamide D-ribonucleotide: step 1/1. The polypeptide is Nicotinamide-nucleotide adenylyltransferase (Saccharolobus solfataricus (strain ATCC 35092 / DSM 1617 / JCM 11322 / P2) (Sulfolobus solfataricus)).